Here is a 253-residue protein sequence, read N- to C-terminus: MSFVVVIPARYASTRLPGKPLADIHGKPMVQHVVEKALQSGADRVIVATDDERVQQALAACAGQAGFEVCMTSKDHQSGTERLAEVCRHYGFAADTIVVNVQGDEPLIPPVIIRQVADNLAAATAPMATLSVPIQDAEEVFNPNAVKVVTDQEGYALYFSRASIPWDRDRFAASREQIGDHYQRHIGIYAYRAGFIQRYVDWAPSALEQIEALEQLRVLWYGEKIHVAQALEAPPVGVDTQADLDKVRALLAN.

Belongs to the KdsB family.

The protein resides in the cytoplasm. It catalyses the reaction 3-deoxy-alpha-D-manno-oct-2-ulosonate + CTP = CMP-3-deoxy-beta-D-manno-octulosonate + diphosphate. The protein operates within nucleotide-sugar biosynthesis; CMP-3-deoxy-D-manno-octulosonate biosynthesis; CMP-3-deoxy-D-manno-octulosonate from 3-deoxy-D-manno-octulosonate and CTP: step 1/1. It participates in bacterial outer membrane biogenesis; lipopolysaccharide biosynthesis. Activates KDO (a required 8-carbon sugar) for incorporation into bacterial lipopolysaccharide in Gram-negative bacteria. The protein is 3-deoxy-manno-octulosonate cytidylyltransferase of Aeromonas hydrophila subsp. hydrophila (strain ATCC 7966 / DSM 30187 / BCRC 13018 / CCUG 14551 / JCM 1027 / KCTC 2358 / NCIMB 9240 / NCTC 8049).